The following is a 293-amino-acid chain: 33 kDa chaperonin (293 aa).

Cystine bridges form between Cys-236–Cys-238 and Cys-269–Cys-272.

The protein belongs to the HSP33 family. Post-translationally, under oxidizing conditions two disulfide bonds are formed involving the reactive cysteines. Under reducing conditions zinc is bound to the reactive cysteines and the protein is inactive.

Its subcellular location is the cytoplasm. Functionally, redox regulated molecular chaperone. Protects both thermally unfolding and oxidatively damaged proteins from irreversible aggregation. Plays an important role in the bacterial defense system toward oxidative stress. The polypeptide is 33 kDa chaperonin (Lactobacillus delbrueckii subsp. bulgaricus (strain ATCC BAA-365 / Lb-18)).